Consider the following 440-residue polypeptide: Xylose isomerase (440 aa).

Residues H100 and D103 contribute to the active site. Residues E231, E267, H270, D295, D306, D308, and D338 each coordinate Mg(2+).

It belongs to the xylose isomerase family. Homotetramer. Requires Mg(2+) as cofactor.

The protein localises to the cytoplasm. It carries out the reaction alpha-D-xylose = alpha-D-xylulofuranose. The polypeptide is Xylose isomerase (Burkholderia cenocepacia (strain ATCC BAA-245 / DSM 16553 / LMG 16656 / NCTC 13227 / J2315 / CF5610) (Burkholderia cepacia (strain J2315))).